Reading from the N-terminus, the 552-residue chain is Kumamolisin (552 aa).

Residues 1-17 (MSDMEKPWKEEEKREVL) show a composition bias toward basic and acidic residues. The segment at 1–34 (MSDMEKPWKEEEKREVLAGHARRQAPQAVDKGPV) is disordered. A Peptidase S53 domain is found at 193 to 546 (AYTPLDVAQA…IRLLQALLPS (354 aa)). Residues Glu-266, Asp-270, and Ser-466 each act as charge relay system in the active site. Ca(2+)-binding residues include Asp-504, Ile-505, Gly-522, Gly-524, and Asp-526.

In terms of assembly, forms monomeric and dimeric crystals. Requires Ca(2+) as cofactor. Post-translationally, autocatalytically processed.

Its subcellular location is the secreted. The catalysed reaction is The enzyme preferentially hydrolyzes peptides having an Ala or Pro residue at P2 position and prefers such charged amino acid residues as Glu or Arg at the P2' position. In the oxidized insulin B chain, kumamolysin preferentially cleaves between Leu(15) and Tyr(16).. Inactivated at 22.4 and 37 degrees Celsius, but not at 60 degrees Celsius, by aldehyde-type inhibitors such as acetyl-Ile-Ala-Phe-CHO and acetyl-Ile-Pro-Phe-CHO. Insensitive to the known carboxyl proteinase inhibitors pepstatin, diazoacetyl-DL-norleucine methyl ester (DAN) and 1,2-epoxy-3-(p-nitrophenoxy)propane (EPNP). Not inhibited by Ala-Ala-Phe-chloromethylketone, an inhibitor of the human tripeptidyl-peptidase 1. Thermostable pepstatin-insensitive serine-carboxyl proteinase. Preferentially hydrolyzes synthetic peptides having an Ala or Pro residue at the P2 position and charged amino acids such as Glu or Arg at the P2' position. In vitro, specifically hydrolyzes the Leu-15-Tyr-16 peptide bond in oxidized insulin B-chain. Additional cleavage of oxidized insulin B-chain at Phe-25-Tyr-26 is detected at a considerably lower rate. Can hydrolyze collagen and the chromogenic substrate azocoll. Shows lower activity with albumin and casein. Shows very weak tripeptidyl peptidase activity. The protein is Kumamolisin of Bacillus sp. (strain MN-32).